A 221-amino-acid chain; its full sequence is MRLILLGAPGAGKGTQAQFICEKFAIPQISTGDMLRAAVKARTELGVAAKKIMDAGGLVSDDIIIGLVKDRLTQPDCSKGYLFDGFPRTIPQAQVMKDAGVPIDYVLEIDVPFDAIIDRMGGRRVHLASGRTYHIKFNPPKVEGKDDITGDPLIQRDDDKEETVRKRLQVYDDQTRPLVEYYSSWAAQANPADKVKAPTYRKVSGTSSVEDITASIFAALK.

An ATP-binding site is contributed by 10 to 15; the sequence is GAGKGT. An NMP region spans residues 30–59; the sequence is STGDMLRAAVKARTELGVAAKKIMDAGGLV. AMP-binding positions include T31, R36, 57 to 59, 85 to 88, and Q92; these read GLV and GFPR. The segment at 122–159 is LID; that stretch reads GRRVHLASGRTYHIKFNPPKVEGKDDITGDPLIQRDDD. Residues R123 and 132 to 133 each bind ATP; that span reads TY. The AMP site is built by R156 and R167. Residue S207 participates in ATP binding.

This sequence belongs to the adenylate kinase family. As to quaternary structure, monomer.

It is found in the cytoplasm. The enzyme catalyses AMP + ATP = 2 ADP. Its pathway is purine metabolism; AMP biosynthesis via salvage pathway; AMP from ADP: step 1/1. Catalyzes the reversible transfer of the terminal phosphate group between ATP and AMP. Plays an important role in cellular energy homeostasis and in adenine nucleotide metabolism. The polypeptide is Adenylate kinase (Polynucleobacter necessarius subsp. necessarius (strain STIR1)).